Consider the following 321-residue polypeptide: Acetyl-coenzyme A carboxylase carboxyl transferase subunit alpha (321 aa).

A CoA carboxyltransferase C-terminal domain is found at 39-293; it reads RLEVKSQALT…KRALAEALRQ (255 aa).

Belongs to the AccA family. As to quaternary structure, acetyl-CoA carboxylase is a heterohexamer composed of biotin carboxyl carrier protein (AccB), biotin carboxylase (AccC) and two subunits each of ACCase subunit alpha (AccA) and ACCase subunit beta (AccD).

The protein resides in the cytoplasm. It carries out the reaction N(6)-carboxybiotinyl-L-lysyl-[protein] + acetyl-CoA = N(6)-biotinyl-L-lysyl-[protein] + malonyl-CoA. The protein operates within lipid metabolism; malonyl-CoA biosynthesis; malonyl-CoA from acetyl-CoA: step 1/1. Its function is as follows. Component of the acetyl coenzyme A carboxylase (ACC) complex. First, biotin carboxylase catalyzes the carboxylation of biotin on its carrier protein (BCCP) and then the CO(2) group is transferred by the carboxyltransferase to acetyl-CoA to form malonyl-CoA. The chain is Acetyl-coenzyme A carboxylase carboxyl transferase subunit alpha from Azoarcus sp. (strain BH72).